A 229-amino-acid chain; its full sequence is Large ribosomal subunit protein uL1 (229 aa).

It belongs to the universal ribosomal protein uL1 family. In terms of assembly, part of the 50S ribosomal subunit.

Binds directly to 23S rRNA. The L1 stalk is quite mobile in the ribosome, and is involved in E site tRNA release. Its function is as follows. Protein L1 is also a translational repressor protein, it controls the translation of the L11 operon by binding to its mRNA. This Actinobacillus pleuropneumoniae serotype 3 (strain JL03) protein is Large ribosomal subunit protein uL1.